A 598-amino-acid polypeptide reads, in one-letter code: Thiol:disulfide interchange protein DsbD (598 aa).

A signal peptide spans 1-19 (MAYRIITLILLLCSTSATA). Cysteine 122 and cysteine 128 form a disulfide bridge. The disordered stretch occupies residues 147–187 (DGQATAIEPMPSTSSRPAFNPPLPVEPRPAPELATSPAPAA). Positions 165–176 (FNPPLPVEPRPA) are enriched in pro residues. 7 consecutive transmembrane segments (helical) span residues 197-217 (LPFTALWALLIGIGIAFTPCV), 242-262 (LLAFIYVQGMALTYTALGLVV), 277-297 (YVLVGLSAVFILLALSMFGLF), 330-350 (IAGLICSPCTTAPLSAILLYI), 356-376 (LWLGGGTLYLYALGMGLPLIL), 391-411 (WMSHVKTAFGFVILALPVFLL), and 423-443 (LWSMLGVAFFSWAFITSLGAT). A disulfide bond links cysteine 216 and cysteine 338. The Thioredoxin domain maps to 459–598 (LVSARPLQDW…FSAHLRDWQA (140 aa)). Cysteine 513 and cysteine 516 are oxidised to a cystine.

It belongs to the thioredoxin family. DsbD subfamily.

The protein localises to the cell inner membrane. It carries out the reaction [protein]-dithiol + NAD(+) = [protein]-disulfide + NADH + H(+). The enzyme catalyses [protein]-dithiol + NADP(+) = [protein]-disulfide + NADPH + H(+). Required to facilitate the formation of correct disulfide bonds in some periplasmic proteins and for the assembly of the periplasmic c-type cytochromes. Acts by transferring electrons from cytoplasmic thioredoxin to the periplasm. This transfer involves a cascade of disulfide bond formation and reduction steps. The polypeptide is Thiol:disulfide interchange protein DsbD (Klebsiella pneumoniae subsp. pneumoniae (strain ATCC 700721 / MGH 78578)).